The sequence spans 115 residues: Large ribosomal subunit protein bL20 (115 aa).

The protein belongs to the bacterial ribosomal protein bL20 family.

Its function is as follows. Binds directly to 23S ribosomal RNA and is necessary for the in vitro assembly process of the 50S ribosomal subunit. It is not involved in the protein synthesizing functions of that subunit. The protein is Large ribosomal subunit protein bL20 of Malacoplasma penetrans (strain HF-2) (Mycoplasma penetrans).